Reading from the N-terminus, the 544-residue chain is Probable protein kinase UbiB (544 aa).

Positions 123–501 constitute a Protein kinase domain; it reads DFDLVPLASA…KRQQATGKFL (379 aa). ATP contacts are provided by residues 129 to 137 and lysine 152; that span reads LASASIAQV. Catalysis depends on aspartate 287, which acts as the Proton acceptor. Helical transmembrane passes span 496-516 and 519-539; these read ATGKFLFGVGATLVVCSAILV and TYEQLSLATAIAGVTFWLFSW.

The protein belongs to the ABC1 family. UbiB subfamily.

It is found in the cell inner membrane. It functions in the pathway cofactor biosynthesis; ubiquinone biosynthesis [regulation]. In terms of biological role, is probably a protein kinase regulator of UbiI activity which is involved in aerobic coenzyme Q (ubiquinone) biosynthesis. This chain is Probable protein kinase UbiB, found in Vibrio vulnificus (strain CMCP6).